The following is a 28-amino-acid chain: Probable small spore coat assembly protein B (28 aa).

The helical transmembrane segment at V4–A24 threads the bilayer.

Belongs to the SscA family.

The protein localises to the membrane. This is Probable small spore coat assembly protein B from Bacillus subtilis (strain 168).